The primary structure comprises 384 residues: Galactokinase (384 aa).

35–38 provides a ligand contact to substrate; the sequence is EHTD. Residues S69 and 125–131 each bind ATP; that span reads GAGLSSS. Residues S131 and E163 each coordinate Mg(2+). Residue D175 is the Proton acceptor of the active site. Y224 is a binding site for substrate.

Belongs to the GHMP kinase family. GalK subfamily.

The protein localises to the cytoplasm. The enzyme catalyses alpha-D-galactose + ATP = alpha-D-galactose 1-phosphate + ADP + H(+). Its pathway is carbohydrate metabolism; galactose metabolism. Functionally, catalyzes the transfer of the gamma-phosphate of ATP to D-galactose to form alpha-D-galactose-1-phosphate (Gal-1-P). This chain is Galactokinase, found in Aliivibrio fischeri (strain ATCC 700601 / ES114) (Vibrio fischeri).